Consider the following 378-residue polypeptide: Signal peptide peptidase (378 aa).

The tract at residues 1 to 27 (MDSAVSDPHNGSAEAGTPANGTTRPPS) is disordered. Residues 1-31 (MDSAVSDPHNGSAEAGTPANGTTRPPSTPEG) are Lumenal-facing. N-linked (GlcNAc...) asparagine glycosylation is found at Asn10 and Asn20. Residues 32-52 (IALAYGSLLLMALLPIFFGAL) traverse the membrane as a helical segment. Residues 53 to 77 (RSVRCARGKSSSDMPETITSRDAAR) lie on the Cytoplasmic side of the membrane. The helical transmembrane segment at 78–98 (FPIIASCTLLGLYLFFKIFSQ) threads the bilayer. Over 99–100 (EY) the chain is Lumenal. Residues 101–121 (INLLLSMYFFVLGILALSHTI) traverse the membrane as a helical segment. The Cytoplasmic segment spans residues 122-157 (SPFMNKFFPANFPNRQYQLLFTQGSGENKEEIINYE). A helical membrane pass occupies residues 158 to 178 (FDTKDLVCLGLSSVVGVWYLL). The Lumenal segment spans residues 179 to 181 (RKH). A helical transmembrane segment spans residues 182 to 202 (WIANNLFGLAFSLNGVELLHL). The Cytoplasmic segment spans residues 203 to 209 (NNVSTGC). The helical transmembrane segment at 210-230 (ILLGGLFIYDIFWVFGTNVMV) threads the bilayer. The active site involves Asp219. Residues 231 to 256 (TVAKSFEAPIKLVFPQDLLEKGLEAD) lie on the Lumenal side of the membrane. A helical transmembrane segment spans residues 257-277 (NFAMLGLGDIVIPGIFIALLL). Asp265 is a catalytic residue. Residues 278–290 (RFDISLKKNTHTY) lie on the Cytoplasmic side of the membrane. The chain crosses the membrane as a helical span at residues 291–311 (FYTSFAAYIFGLGLTIFIMHI). The Lumenal portion of the chain corresponds to 312–314 (FKH). A helical transmembrane segment spans residues 315-335 (AQPALLYLVPACIGFPVLVAL). A PAL motif is present at residues 317–319 (PAL). Over 336 to 378 (AKGEVAEMFSYEESNPKDPAAETESKEESTEASASKRLEKKEK) the chain is Cytoplasmic. Residues 346–378 (YEESNPKDPAAETESKEESTEASASKRLEKKEK) form a disordered region. Over residues 349–378 (SNPKDPAAETESKEESTEASASKRLEKKEK) the composition is skewed to basic and acidic residues. Ser368 carries the post-translational modification Phosphoserine.

This sequence belongs to the peptidase A22B family. As to quaternary structure, monomer. Homodimer. Interacts with RNF139. Interacts with DERL1 and XBP1 isoform 1. As to expression, widely expressed with highest levels in liver and kidney. In the brain, expressed predominantly in hippocampus, amygdala, piriform cortex, choroid plexus and arcuate nucleus of the hypothalamic area. Isoform 1 is more strongly expressed than isoform 4 in most tissues except brain and skeletal muscle where isoform 4 is the dominant isoform and in testis where isoform 1 and isoform 4 are expressed at similar levels. In the brain, isoform 4 is not detected in the choroid plexus.

Its subcellular location is the endoplasmic reticulum membrane. It localises to the membrane. The protein localises to the cell membrane. Catalyzes intramembrane proteolysis of signal peptides that have been removed from precursors of secretory and membrane proteins, resulting in the release of the fragment from the ER membrane into the cytoplasm. Required to generate lymphocyte cell surface (HLA-E) epitopes derived from MHC class I signal peptides. Involved in the intramembrane cleavage of the integral membrane protein PSEN1. Cleaves the integral membrane protein XBP1 isoform 1 in a DERL1/RNF139-dependent manner. May play a role in graft rejection. This Mus musculus (Mouse) protein is Signal peptide peptidase.